A 648-amino-acid polypeptide reads, in one-letter code: Acetyl-coenzyme A synthetase (648 aa).

Residues 190–193, threonine 308, and asparagine 332 contribute to the CoA site; that span reads RGGK. Residues 384-386, 408-413, aspartate 497, and arginine 512 each bind ATP; these read GEP and DTWWQT. Serine 520 contributes to the CoA binding site. Position 523 (arginine 523) interacts with ATP. Mg(2+) is bound by residues valine 534, histidine 536, and valine 539. A CoA-binding site is contributed by arginine 581. Lysine 606 bears the N6-acetyllysine mark.

Belongs to the ATP-dependent AMP-binding enzyme family. Mg(2+) is required as a cofactor. In terms of processing, acetylated. Deacetylation by the SIR2-homolog deacetylase activates the enzyme.

The enzyme catalyses acetate + ATP + CoA = acetyl-CoA + AMP + diphosphate. In terms of biological role, catalyzes the conversion of acetate into acetyl-CoA (AcCoA), an essential intermediate at the junction of anabolic and catabolic pathways. AcsA undergoes a two-step reaction. In the first half reaction, AcsA combines acetate with ATP to form acetyl-adenylate (AcAMP) intermediate. In the second half reaction, it can then transfer the acetyl group from AcAMP to the sulfhydryl group of CoA, forming the product AcCoA. The protein is Acetyl-coenzyme A synthetase of Bradyrhizobium diazoefficiens (strain JCM 10833 / BCRC 13528 / IAM 13628 / NBRC 14792 / USDA 110).